A 522-amino-acid chain; its full sequence is Chromosomal replication initiator protein DnaA (522 aa).

The domain I, interacts with DnaA modulators stretch occupies residues 1 to 71 (MQDFWHAASA…QSLACDYWEM (71 aa)). The tract at residues 71–185 (MQVDVQFVLD…PVDDTVHERS (115 aa)) is domain II. Positions 186 to 402 (RLNPILTFDN…GALRKILAYS (217 aa)) are domain III, AAA+ region. ATP is bound by residues Gly-230, Gly-232, Lys-233, and Thr-234. Positions 403 to 522 (NFHGKEITIE…LHVLEQTLKG (120 aa)) are domain IV, binds dsDNA.

Belongs to the DnaA family. In terms of assembly, oligomerizes as a right-handed, spiral filament on DNA at oriC.

The protein resides in the cytoplasm. Its function is as follows. Plays an essential role in the initiation and regulation of chromosomal replication. ATP-DnaA binds to the origin of replication (oriC) to initiate formation of the DNA replication initiation complex once per cell cycle. Binds the DnaA box (a 9 base pair repeat at the origin) and separates the double-stranded (ds)DNA. Forms a right-handed helical filament on oriC DNA; dsDNA binds to the exterior of the filament while single-stranded (ss)DNA is stabiized in the filament's interior. The ATP-DnaA-oriC complex binds and stabilizes one strand of the AT-rich DNA unwinding element (DUE), permitting loading of DNA polymerase. After initiation quickly degrades to an ADP-DnaA complex that is not apt for DNA replication. Binds acidic phospholipids. This Ralstonia nicotianae (strain ATCC BAA-1114 / GMI1000) (Ralstonia solanacearum) protein is Chromosomal replication initiator protein DnaA.